The following is a 208-amino-acid chain: Large ribosomal subunit protein uL4 (208 aa).

The interval 50-83 (VKTRAEVSGGGRKPWKQKGTGRARQGSIRAPQWK) is disordered.

It belongs to the universal ribosomal protein uL4 family. As to quaternary structure, part of the 50S ribosomal subunit.

In terms of biological role, one of the primary rRNA binding proteins, this protein initially binds near the 5'-end of the 23S rRNA. It is important during the early stages of 50S assembly. It makes multiple contacts with different domains of the 23S rRNA in the assembled 50S subunit and ribosome. Functionally, forms part of the polypeptide exit tunnel. The chain is Large ribosomal subunit protein uL4 from Mycoplasma mycoides subsp. mycoides SC (strain CCUG 32753 / NCTC 10114 / PG1).